Consider the following 316-residue polypeptide: Putative ubiquitin-conjugating enzyme E2 39 (316 aa).

The UBC core domain occupies 57–217 (NWVKDIQKEW…VFVFSLKTMH (161 aa)). The active-site Glycyl thioester intermediate is the C143.

This sequence belongs to the ubiquitin-conjugating enzyme family.

The enzyme catalyses S-ubiquitinyl-[E1 ubiquitin-activating enzyme]-L-cysteine + [E2 ubiquitin-conjugating enzyme]-L-cysteine = [E1 ubiquitin-activating enzyme]-L-cysteine + S-ubiquitinyl-[E2 ubiquitin-conjugating enzyme]-L-cysteine.. The protein operates within protein modification; protein ubiquitination. Functionally, accepts the ubiquitin from the E1 complex and catalyzes its covalent attachment to other proteins. In Arabidopsis thaliana (Mouse-ear cress), this protein is Putative ubiquitin-conjugating enzyme E2 39 (UBC39).